Consider the following 218-residue polypeptide: Pyridoxine/pyridoxamine 5'-phosphate oxidase (218 aa).

Residues 14–17 (RREY) and Lys72 contribute to the substrate site. Residues 67 to 72 (RIVLLK), 82 to 83 (YT), Arg88, Lys89, and Gln111 each bind FMN. The substrate site is built by Tyr129, Arg133, and Ser137. Residues 146-147 (QS) and Trp191 each bind FMN. 197 to 199 (RLH) contacts substrate. Residue Arg201 participates in FMN binding.

This sequence belongs to the pyridoxamine 5'-phosphate oxidase family. As to quaternary structure, homodimer. Requires FMN as cofactor.

It carries out the reaction pyridoxamine 5'-phosphate + O2 + H2O = pyridoxal 5'-phosphate + H2O2 + NH4(+). The enzyme catalyses pyridoxine 5'-phosphate + O2 = pyridoxal 5'-phosphate + H2O2. It functions in the pathway cofactor metabolism; pyridoxal 5'-phosphate salvage; pyridoxal 5'-phosphate from pyridoxamine 5'-phosphate: step 1/1. The protein operates within cofactor metabolism; pyridoxal 5'-phosphate salvage; pyridoxal 5'-phosphate from pyridoxine 5'-phosphate: step 1/1. Catalyzes the oxidation of either pyridoxine 5'-phosphate (PNP) or pyridoxamine 5'-phosphate (PMP) into pyridoxal 5'-phosphate (PLP). The sequence is that of Pyridoxine/pyridoxamine 5'-phosphate oxidase from Escherichia fergusonii (strain ATCC 35469 / DSM 13698 / CCUG 18766 / IAM 14443 / JCM 21226 / LMG 7866 / NBRC 102419 / NCTC 12128 / CDC 0568-73).